We begin with the raw amino-acid sequence, 121 residues long: Small ribosomal subunit protein uS13 (121 aa).

The tract at residues Pro96–Lys121 is disordered. Residues Ala106 to Lys121 are compositionally biased toward basic residues.

This sequence belongs to the universal ribosomal protein uS13 family. In terms of assembly, part of the 30S ribosomal subunit. Forms a loose heterodimer with protein S19. Forms two bridges to the 50S subunit in the 70S ribosome.

Located at the top of the head of the 30S subunit, it contacts several helices of the 16S rRNA. In the 70S ribosome it contacts the 23S rRNA (bridge B1a) and protein L5 of the 50S subunit (bridge B1b), connecting the 2 subunits; these bridges are implicated in subunit movement. Contacts the tRNAs in the A and P-sites. This chain is Small ribosomal subunit protein uS13, found in Streptococcus pyogenes serotype M3 (strain SSI-1).